Here is a 416-residue protein sequence, read N- to C-terminus: Bifunctional protein GlmU (416 aa).

Residues 1–229 form a pyrophosphorylase region; the sequence is MTNYAIILAA…FNESLGVNDR (229 aa). Residues 8-11, Lys-22, Gln-72, and 77-78 contribute to the UDP-N-acetyl-alpha-D-glucosamine site; these read LAAG and GT. Asp-102 is a Mg(2+) binding site. Gly-139, Glu-154, Asn-169, and Asn-227 together coordinate UDP-N-acetyl-alpha-D-glucosamine. A Mg(2+)-binding site is contributed by Asn-227. The segment at 230-250 is linker; the sequence is VALATAETVMRQRITQKHMVN. The tract at residues 251–416 is N-acetyltransferase; that stretch reads GVTFQNPETV…DSHCTFGSWR (166 aa). UDP-N-acetyl-alpha-D-glucosamine contacts are provided by Arg-332 and Lys-350. The active-site Proton acceptor is His-362. UDP-N-acetyl-alpha-D-glucosamine is bound by residues Tyr-365 and Asn-376. Acetyl-CoA-binding positions include Ala-379 and 385 to 386; that span reads NY.

This sequence in the N-terminal section; belongs to the N-acetylglucosamine-1-phosphate uridyltransferase family. In the C-terminal section; belongs to the transferase hexapeptide repeat family. As to quaternary structure, homotrimer. Requires Mg(2+) as cofactor.

The protein localises to the cytoplasm. The enzyme catalyses alpha-D-glucosamine 1-phosphate + acetyl-CoA = N-acetyl-alpha-D-glucosamine 1-phosphate + CoA + H(+). It catalyses the reaction N-acetyl-alpha-D-glucosamine 1-phosphate + UTP + H(+) = UDP-N-acetyl-alpha-D-glucosamine + diphosphate. It participates in nucleotide-sugar biosynthesis; UDP-N-acetyl-alpha-D-glucosamine biosynthesis; N-acetyl-alpha-D-glucosamine 1-phosphate from alpha-D-glucosamine 6-phosphate (route II): step 2/2. It functions in the pathway nucleotide-sugar biosynthesis; UDP-N-acetyl-alpha-D-glucosamine biosynthesis; UDP-N-acetyl-alpha-D-glucosamine from N-acetyl-alpha-D-glucosamine 1-phosphate: step 1/1. The protein operates within bacterial outer membrane biogenesis; LPS lipid A biosynthesis. Catalyzes the last two sequential reactions in the de novo biosynthetic pathway for UDP-N-acetylglucosamine (UDP-GlcNAc). The C-terminal domain catalyzes the transfer of acetyl group from acetyl coenzyme A to glucosamine-1-phosphate (GlcN-1-P) to produce N-acetylglucosamine-1-phosphate (GlcNAc-1-P), which is converted into UDP-GlcNAc by the transfer of uridine 5-monophosphate (from uridine 5-triphosphate), a reaction catalyzed by the N-terminal domain. This Streptococcus pyogenes serotype M12 (strain MGAS2096) protein is Bifunctional protein GlmU.